We begin with the raw amino-acid sequence, 975 residues long: MAKGFYISKALGILAIVLGIAAVSTIIALSVVYAQEKNKNAESSPVSSPVSSPVSSPVSPTNPSTTAATTLAQSKPWNHYRLPKTLIPSSYNVTLRPYLTPNSNGLYTFKGSSTVRFTCKESTSMIIIHSKKLNYTNIQGQRVALRGVGGSQAPAIDRTELVEVTEYLVVHLREPLQVNSQYEMDSKFEGELADDLAGFYRSEYTENGVKKVLATTQMQAADARKSFPCFDEPAMKATFNITLIHPSNLVALSNMLPRGPSVPFTEEPNWNVTEFETTPIMSTYLLAYIVSEFKNVQENTPSNVLIRIWARPSAMDQGHGNYALRVTGPILDFFSRHYDTPYPLNKSDQIALPDFNAGAMENWGLVTYRESALLYDPQSSSIGNKERVVTVIAHELAHQWFGNLVTLEWWNDLWLNEGFASYVEYLGADYAEPTWNLKDLIVLNEVYRVMAVDALASSHPLSSPASEVNTPAQISEVFDSISYSKGASVLRMLSSFLTEDLFKKGVASYLHTFAYQNTIYLDLWNHLQWALGNQTAINLPYTVNAIMDRWILQMGFPVVTVDTTTGTLSQKHFLLDPQSNVTRPSKFNYLWIIPISSVKSGTQQAHYWMPDNAKVQNDLFKTTGDEWVLLNLNVTGYYLVNYDQNNWKKIHTQLQTDLSVIPVINRAQVIHDTFDLASAQIVPVTLALNSTLFLNQETEYMPWEAALSSLSYFKLMFDRSEVYGPMKNYLRKQVTPLFNHFEKITQNWTDHPQTLTEQYNEINAVSTACTYGVPKCKDLVSTLFAEWRKNPQNNPIYPNLRSTVYCNAIAQGGEEEWNFVWEQFRNTSLVNEADKLRSALACSTQVWILNRYLSYTLNPEFIRKQDVISTLSSIASNVIGQSLAWDFIQSNWKKLFEDYGTGSFSFSNLIQAVTRRFSTEFELQQLEQFKANNMDTGFGSGTRALEQALEKTKANIKWVKENKEAVLQWFRENSQ.

Over 1 to 11 the chain is Cytoplasmic; the sequence is MAKGFYISKAL. The helical; Signal-anchor for type II membrane protein transmembrane segment at 12–32 threads the bilayer; that stretch reads GILAIVLGIAAVSTIIALSVV. The tract at residues 33–74 is cytosolic Ser/Thr-rich junction; sequence YAQEKNKNAESSPVSSPVSSPVSSPVSPTNPSTTAATTLAQS. The Extracellular segment spans residues 33-975; it reads YAQEKNKNAE…VLQWFRENSQ (943 aa). A disordered region spans residues 41 to 68; that stretch reads AESSPVSSPVSSPVSSPVSPTNPSTTAA. Residues 43–59 show a composition bias toward low complexity; the sequence is SSPVSSPVSSPVSSPVS. The interval 75–975 is metalloprotease; it reads KPWNHYRLPK…VLQWFRENSQ (901 aa). Residue N134 is glycosylated (N-linked (GlcNAc...) asparagine). Y182 carries the sulfotyrosine modification. N-linked (GlcNAc...) asparagine glycans are attached at residues N240 and N271. Residue 358–362 coordinates substrate; sequence GAMEN. Residue H394 coordinates Zn(2+). E395 (proton acceptor) is an active-site residue. Residues H398 and E417 each coordinate Zn(2+). Residues Y425 and Y430 each carry the sulfotyrosine modification. 5 N-linked (GlcNAc...) asparagine glycosylation sites follow: N533, N580, N633, N689, and N747. 2 disulfide bridges follow: C769–C776 and C806–C842. N826 carries an N-linked (GlcNAc...) asparagine glycan.

This sequence belongs to the peptidase M1 family. In terms of assembly, (Microbial infection) Interacts with CCoV spike glycoprotein. As to quaternary structure, homodimer. Interacts with SLC6A19. It depends on Zn(2+) as a cofactor. Sulfated. Post-translationally, N- and O-glycosylated. In terms of processing, may undergo proteolysis and give rise to a soluble form.

Its subcellular location is the cell membrane. The enzyme catalyses Release of an N-terminal amino acid, Xaa-|-Yaa- from a peptide, amide or arylamide. Xaa is preferably Ala, but may be most amino acids including Pro (slow action). When a terminal hydrophobic residue is followed by a prolyl residue, the two may be released as an intact Xaa-Pro dipeptide.. Its function is as follows. Broad specificity aminopeptidase which plays a role in the final digestion of peptides generated from hydrolysis of proteins by gastric and pancreatic proteases. Also involved in the processing of various peptides including peptide hormones, such as angiotensin III and IV, neuropeptides, and chemokines. May also be involved the cleavage of peptides bound to major histocompatibility complex class II molecules of antigen presenting cells. May have a role in angiogenesis and promote cholesterol crystallization. May have a role in amino acid transport by acting as binding partner of amino acid transporter SLC6A19 and regulating its activity. Functionally, (Microbial infection) Probable receptor for canine coronavirus (CCoV). In Canis lupus familiaris (Dog), this protein is Aminopeptidase N (ANPEP).